We begin with the raw amino-acid sequence, 133 residues long: Large ribosomal subunit protein uL22c (133 aa).

The protein belongs to the universal ribosomal protein uL22 family. In terms of assembly, part of the 50S ribosomal subunit.

The protein resides in the plastid. It localises to the chloroplast. This protein binds specifically to 23S rRNA. In terms of biological role, the globular domain of the protein is located near the polypeptide exit tunnel on the outside of the subunit, while an extended beta-hairpin is found that lines the wall of the exit tunnel in the center of the 70S ribosome. In Manihot esculenta (Cassava), this protein is Large ribosomal subunit protein uL22c (rpl22).